The primary structure comprises 533 residues: GMP synthase [glutamine-hydrolyzing] (533 aa).

The Glutamine amidotransferase type-1 domain maps to 12–206 (TILVLDFGSQ…AVGICGAEQK (195 aa)). Residue cysteine 88 is the Nucleophile of the active site. Residues histidine 180 and glutamate 182 contribute to the active site. The GMPS ATP-PPase domain occupies 207–408 (WTMAEFIGQE…LGISPELVGR (202 aa)). 235–241 (SGGVDST) serves as a coordination point for ATP. Positions 308, 470, 525, and 531 each coordinate XMP.

Homodimer. The cofactor is Mg(2+).

It is found in the cytoplasm. The protein resides in the cytosol. The enzyme catalyses XMP + L-glutamine + ATP + H2O = GMP + L-glutamate + AMP + diphosphate + 2 H(+). The protein operates within purine metabolism; GMP biosynthesis; GMP from XMP (L-Gln route): step 1/1. In terms of biological role, catalyzes the conversion of xanthine monophosphate (XMP) to GMP in the presence of glutamine and ATP through an adenyl-XMP intermediate. This Emericella nidulans (strain FGSC A4 / ATCC 38163 / CBS 112.46 / NRRL 194 / M139) (Aspergillus nidulans) protein is GMP synthase [glutamine-hydrolyzing] (gua1).